The following is a 231-amino-acid chain: Urease accessory protein UreE (231 aa).

The segment at 185–231 (VASPLDEPHGSGLHIHGIHSHGEGHSHGDHDHDHSHSHGDHDHDHKH) is disordered. Basic and acidic residues predominate over residues 204 to 231 (SHGEGHSHGDHDHDHSHSHGDHDHDHKH).

The protein belongs to the UreE family.

The protein localises to the cytoplasm. Involved in urease metallocenter assembly. Binds nickel. Probably functions as a nickel donor during metallocenter assembly. The chain is Urease accessory protein UreE from Yersinia pseudotuberculosis serotype O:1b (strain IP 31758).